Consider the following 579-residue polypeptide: Pre-mRNA-processing factor 17 (579 aa).

The segment covering Met1–Glu19 has biased composition (low complexity). 2 disordered regions span residues Met1 to Ala34 and Asp204 to Glu237. WD repeat units lie at residues Gly286 to Arg326, Gly330 to Arg369, Thr371 to Glu413, Arg416 to Tyr455, Pro459 to Lys498, Gly504 to Arg545, and Ala548 to Trp578.

In terms of assembly, component of the catalytic spliceosome C complexes. Component of the postcatalytic spliceosome P complex. Interacts with PPIL1; this interaction leads to CDC40 isomerization. Undergoes isomerization of the peptide bond between Gly-94 and Pro-95. The reaction is catalyzed by PPIL1.

Its subcellular location is the nucleus. The protein resides in the nucleus speckle. Functionally, required for pre-mRNA splicing as component of the activated spliceosome. Plays an important role in embryonic brain development; this function does not require proline peptide bond isomerization. The sequence is that of Pre-mRNA-processing factor 17 (Cdc40) from Mus musculus (Mouse).